Reading from the N-terminus, the 239-residue chain is Ribosomal RNA small subunit methyltransferase G (239 aa).

S-adenosyl-L-methionine is bound by residues G77, F82, A128–E129, and R146. Residues K216–S239 are disordered.

Belongs to the methyltransferase superfamily. RNA methyltransferase RsmG family.

The protein localises to the cytoplasm. Its function is as follows. Specifically methylates the N7 position of guanine in position 535 of 16S rRNA. The sequence is that of Ribosomal RNA small subunit methyltransferase G from Staphylococcus epidermidis (strain ATCC 35984 / DSM 28319 / BCRC 17069 / CCUG 31568 / BM 3577 / RP62A).